The chain runs to 970 residues: Transposase for insertion sequence element IS1071 in transposon Tn5271 (970 aa).

Belongs to the transposase 7 family.

Its function is as follows. Required for transposition of transposon Tn5271. The polypeptide is Transposase for insertion sequence element IS1071 in transposon Tn5271 (Comamonas testosteroni (Pseudomonas testosteroni)).